Consider the following 334-residue polypeptide: Protein-methionine-sulfoxide reductase catalytic subunit MsrP (334 aa).

The tat-type signal signal peptide spans M1–A44. Residues N88, Y91 to E92, C146, T181, N233, R238, and G249 to K251 contribute to the Mo-molybdopterin site.

This sequence belongs to the MsrP family. As to quaternary structure, heterodimer of a catalytic subunit (MsrP) and a heme-binding subunit (MsrQ). Requires Mo-molybdopterin as cofactor. Post-translationally, predicted to be exported by the Tat system. The position of the signal peptide cleavage has not been experimentally proven.

Its subcellular location is the periplasm. The enzyme catalyses L-methionyl-[protein] + a quinone + H2O = L-methionyl-(S)-S-oxide-[protein] + a quinol. The catalysed reaction is L-methionyl-[protein] + a quinone + H2O = L-methionyl-(R)-S-oxide-[protein] + a quinol. Functionally, part of the MsrPQ system that repairs oxidized periplasmic proteins containing methionine sulfoxide residues (Met-O), using respiratory chain electrons. Thus protects these proteins from oxidative-stress damage caused by reactive species of oxygen and chlorine generated by the host defense mechanisms. MsrPQ is essential for the maintenance of envelope integrity under bleach stress, rescuing a wide series of structurally unrelated periplasmic proteins from methionine oxidation, including the primary periplasmic chaperone SurA and the lipoprotein Pal. The catalytic subunit MsrP is non-stereospecific, being able to reduce both (R-) and (S-) diastereoisomers of methionine sulfoxide. The polypeptide is Protein-methionine-sulfoxide reductase catalytic subunit MsrP (Escherichia coli O6:H1 (strain CFT073 / ATCC 700928 / UPEC)).